Here is a 199-residue protein sequence, read N- to C-terminus: Recombination protein RecR (199 aa).

The C4-type zinc-finger motif lies at 57–72; it reads CSVCGNLTDDDPCNIC. A Toprim domain is found at 80-176; sequence STVLVVEDSK…TVTRLARGLA (97 aa).

Belongs to the RecR family.

In terms of biological role, may play a role in DNA repair. It seems to be involved in an RecBC-independent recombinational process of DNA repair. It may act with RecF and RecO. In Streptococcus mutans serotype c (strain ATCC 700610 / UA159), this protein is Recombination protein RecR.